We begin with the raw amino-acid sequence, 760 residues long: U-box domain-containing protein 3 (760 aa).

The stretch at 146 to 217 forms a coiled coil; sequence LMELMENALR…EQTEQLIELV (72 aa). Residues 237 to 311 form the U-box domain; the sequence is SIPPYFRCPL…ASWLEANRIN (75 aa). A compositionally biased stretch (polar residues) spans 424–434; it reads ILGNHQSSSEM. Residues 424-448 form a disordered region; the sequence is ILGNHQSSSEMSPKKNLESSNNVNH. ARM repeat units lie at residues 504–543, 545–584, 586–626, 628–666, and 668–707; these read IENRVHIGRCGAITPLLSLLYSEEKLTQEHAVTALLNLSI, ELNKAMIVEVGAIEPLVHVLNTGNDRAKENSAASLFSLSV, QVNR…NLSI, HDNKARIVQAKAVKYLVELLDPDLEMVDKAVALLANLSA, and GEGRQAIVREGGIPLLVETVDLGSQRGKENAASVLLQLCL.

The enzyme catalyses S-ubiquitinyl-[E2 ubiquitin-conjugating enzyme]-L-cysteine + [acceptor protein]-L-lysine = [E2 ubiquitin-conjugating enzyme]-L-cysteine + N(6)-ubiquitinyl-[acceptor protein]-L-lysine.. It functions in the pathway protein modification; protein ubiquitination. In terms of biological role, functions as an E3 ubiquitin ligase. This Arabidopsis thaliana (Mouse-ear cress) protein is U-box domain-containing protein 3 (PUB3).